A 490-amino-acid chain; its full sequence is MDLVTFLVLTLSSLILLSLWRQSSRRRKLPPGPTPLPIIGNFLQIDVKNISQSLTKFSKTYGPVFTLYLGSQPTVILHGYEAIKEALIDNGEKFSGRGSYPMNENVTKGFGIVFSNGNRWKEMRRFTIMNFRNLGIGKRNIEDRVQEEAQCLVEELRKTKGSPCDPSLILNCAPCNVICSITFQNHFDYKDKEMLTFMEKVNENLKIMSSPWMQVCNSFPSLIDYFPGTHHKIAKNINYMKSYLLKKIEEHQESLDVTNPRDFVDYYLIKQKQANNIEQSEYSHENLTCSIMDLIGAGTETMSTTLRYALLLLMKYPHVTAKVQEEIDRVIGRHRSPCMQDRKHMPYTDAMIHEVQRFINFVPTNLPHAVTCDIKFRNYLIPKGTKVLTSLTSVLHDSKEFPNPEMFDPGHFLDENGNFKKSDYFLPFSAGKRACVGEGLARMQLFLFLTTILQNFNLKSLVHPKDIDTMPVLNGFASLPPTYQLCFIPS.

Dimethylated arginine is present on Arg144. Residue Cys435 coordinates heme.

It belongs to the cytochrome P450 family. Requires heme as cofactor.

Its subcellular location is the endoplasmic reticulum membrane. The protein resides in the microsome membrane. It catalyses the reaction an organic molecule + reduced [NADPH--hemoprotein reductase] + O2 = an alcohol + oxidized [NADPH--hemoprotein reductase] + H2O + H(+). In terms of biological role, cytochromes P450 are a group of heme-thiolate monooxygenases. In liver microsomes, this enzyme is involved in an NADPH-dependent electron transport pathway. It oxidizes a variety of structurally unrelated compounds, including steroids, fatty acids, and xenobiotics. This chain is Cytochrome P450 2C7 (Cyp2c7), found in Rattus norvegicus (Rat).